We begin with the raw amino-acid sequence, 654 residues long: MSGFVGILVSDPWLQNQFTQVELRSLKSHFTSMKRESGKLTVSDLASRMGKSKVVGDQNLSNEERATLIQNFHPNLNDEVDFEFYLRIYLNLQAHVNAIIGSGVKNSSAFLKAATTTLLHTISDSEKSSYVAHINNYLSGDEFLNKCLPINPSSNDLFEVAKDGVLLCKLINVAVPGTIDERAINTKSMLNPWERNENHTLCLNSAKAIGCTVVNIGTQDIIEGRRHLVLGVISQIIKIQLLADLNLKKTPQLVELVGDSKDVEELMSLPPEKILLRWMNFQLRKTEYKKTVTNFSSDVKDAEAYTNLLNVLAPEHKNPSHLAVKSSFERAKLVLEHADKMGCRRYLTAKDIVEGSPNLNLAFVAHIFQHRNGLSTQTKQISFLENLADDIQISREEKAFRFWINSFDGSVYINNVFEDLRDGWILLQTLDKVSPGIVNWKVSSKPPIKLPFKKVENCNQVVKLGKQLKFSLVNIAGNDIVQGNKKLILAYLWQLMRYNILQLLKNLRLHSNGKEITDADILEWANAKVRNNGCKTRMYSFRDKSLSDGVFFLELLSSVQPRSVNWSLVTNGVTDEEKKMNATYVISIARKLGCSIFLLPEDIIEVNQKMMLTLTASIMYWTLKQPLHLNKPIGSPDSHNGSLLDDSTSDSSIE.

Calponin-homology (CH) domains follow at residues 124 to 241 (DSEK…KIQL), 269 to 372 (LPPE…QHRN), 394 to 500 (SREE…RYNI), and 515 to 623 (EITD…YWTL). Actin-binding regions lie at residues 124–372 (DSEK…QHRN) and 394–623 (SREE…YWTL).

In terms of assembly, interacts with F-actin.

Its subcellular location is the cytoplasm. The protein localises to the cytoskeleton. Functionally, cross-links actin filaments (F-actin). Stabilizes and prevents F-actin depolymerization mediated by profilin. May regulate actin cytoarchitecture, cell cycle, cell division, cell elongation and cytoplasmic tractus. The polypeptide is Fimbrin-2 (Arabidopsis thaliana (Mouse-ear cress)).